The sequence spans 706 residues: ABC transporter D family member 2, chloroplastic (706 aa).

Residues 1-44 (MILMITAPVCPPHLLLRHSSLLRHESSIGNFHRKKNPRFRTVSC) constitute a chloroplast transit peptide. Position 45 is an N-acetylserine (serine 45). 5 helical membrane-spanning segments follow: residues 88–108 (LAAV…FNFL), 124–144 (FTKQ…FFVL), 200–222 (TALS…SNIL), 237–257 (SFGG…LNFL), and 326–346 (ILPV…FGVI). An ABC transmembrane type-1 domain is found at 88–372 (LAAVFALTLA…VVYQFQAISS (285 aa)). The 268-residue stretch at 430 to 697 (LEIEELTLQT…DAQDSLYGRL (268 aa)) folds into the ABC transporter domain. Residue 464–471 (GPSGSGKT) participates in ATP binding. Residues 545 to 569 (TTPGGSNIDGSPPLLIREDGNEKPT) form a disordered region. Over residues 560-569 (IREDGNEKPT) the composition is skewed to basic and acidic residues.

This sequence belongs to the ABC transporter superfamily. ABCD family. Peroxisomal fatty acyl CoA transporter (TC 3.A.1.203) subfamily. Homodimer or heterodimer.

Its subcellular location is the membrane. It localises to the plastid. It is found in the chloroplast. In Arabidopsis thaliana (Mouse-ear cress), this protein is ABC transporter D family member 2, chloroplastic (ABCC2).